The primary structure comprises 385 residues: Lipid-A-disaccharide synthase (385 aa).

This sequence belongs to the LpxB family.

It catalyses the reaction a lipid X + a UDP-2-N,3-O-bis[(3R)-3-hydroxyacyl]-alpha-D-glucosamine = a lipid A disaccharide + UDP + H(+). Its pathway is bacterial outer membrane biogenesis; LPS lipid A biosynthesis. Functionally, condensation of UDP-2,3-diacylglucosamine and 2,3-diacylglucosamine-1-phosphate to form lipid A disaccharide, a precursor of lipid A, a phosphorylated glycolipid that anchors the lipopolysaccharide to the outer membrane of the cell. This Rickettsia canadensis (strain McKiel) protein is Lipid-A-disaccharide synthase.